We begin with the raw amino-acid sequence, 795 residues long: Delta-1-pyrroline-5-carboxylate synthase (795 aa).

Residues 1 to 361 (MLSQVYRYGF…FFSEVKPAGP (361 aa)) are glutamate 5-kinase. Positions 117, 223, and 246 each coordinate substrate. ATP contacts are provided by residues 266–267 (SD) and 305–311 (MGGMEAK). Residues lysine 311, lysine 347, and lysine 550 each carry the N6-succinyllysine modification. The tract at residues 362-795 (TVEQQGEMAR…NLPIPQRNTN (434 aa)) is gamma-glutamyl phosphate reductase.

This sequence in the N-terminal section; belongs to the glutamate 5-kinase family. In the C-terminal section; belongs to the gamma-glutamyl phosphate reductase family. Can form homodimers/multimers.

It localises to the mitochondrion matrix. The catalysed reaction is L-glutamate + ATP = L-glutamyl 5-phosphate + ADP. The enzyme catalyses L-glutamate 5-semialdehyde + phosphate + NADP(+) = L-glutamyl 5-phosphate + NADPH + H(+). It participates in amino-acid biosynthesis; L-proline biosynthesis; L-glutamate 5-semialdehyde from L-glutamate: step 1/2. Its pathway is amino-acid biosynthesis; L-proline biosynthesis; L-glutamate 5-semialdehyde from L-glutamate: step 2/2. Its function is as follows. Bifunctional enzyme that converts glutamate to glutamate 5-semialdehyde, an intermediate in the biosynthesis of proline, ornithine and arginine. In Pongo abelii (Sumatran orangutan), this protein is Delta-1-pyrroline-5-carboxylate synthase (ALDH18A1).